Reading from the N-terminus, the 517-residue chain is Pentatricopeptide repeat-containing protein At1g13040, mitochondrial (517 aa).

A mitochondrion-targeting transit peptide spans 1-57; it reads MHQTLGAVRLAYRSRIANLVKSGMIDNAVQVFDEMRHSSYRVFSFDYNRFIGVLVRE. PPR repeat units follow at residues 8 to 42, 43 to 77, 78 to 112, 113 to 147, 148 to 182, 183 to 218, 219 to 253, 254 to 288, 289 to 320, 324 to 358, 359 to 393, 394 to 428, 429 to 463, and 464 to 498; these read VRLA…SYRV, FSFD…GFSL, IPFT…GFIP, DIWA…GREP, DVVS…GVSP, DNKA…RVKL, STVV…GCEP, DLVT…GIQL, DAYS…MEPR, DVVS…GMVM, NVVT…GLSP, DRIF…EITP, DAIS…ECCP, and DELT…GFTL.

The protein belongs to the PPR family. P subfamily.

Its subcellular location is the mitochondrion. This is Pentatricopeptide repeat-containing protein At1g13040, mitochondrial from Arabidopsis thaliana (Mouse-ear cress).